Reading from the N-terminus, the 202-residue chain is MHFSRTSLILFAAGLASAQLPNVPGCSLDCFVAALSADGCSSLTDFACHCQKPELVSNITPCVQSACNIADQSSVSVAVVSQCSAAGHPISVPPVGAASTTASETATTTESSTQTTTGTSSTASKTSSSAASSTPSSSSASSSHHHSSSSALTTRTLTSTEPSSQSTSASAAATTTLSGNAGSEKANVAGVVAVAAAALYLL.

The signal sequence occupies residues 1–18; the sequence is MHFSRTSLILFAAGLASA. A CFEM domain is found at 19–108; the sequence is QLPNVPGCSL…STTASETATT (90 aa). 4 disulfides stabilise this stretch: Cys-26–Cys-67, Cys-30–Cys-62, Cys-40–Cys-48, and Cys-50–Cys-83. Asp-45 is a heme binding site. The segment at 94-171 is disordered; it reads PVGAASTTAS…PSSQSTSASA (78 aa). Over residues 97–171 the composition is skewed to low complexity; that stretch reads AASTTASETA…PSSQSTSASA (75 aa). Asn-180 is lipidated: GPI-anchor amidated asparagine. The propeptide at 181–202 is removed in mature form; the sequence is AGSEKANVAGVVAVAAAALYLL.

Belongs to the RBT5 family. In terms of processing, the GPI-anchor is attached to the protein in the endoplasmic reticulum and serves to target the protein to the cell surface. There, the glucosamine-inositol phospholipid moiety is cleaved off and the GPI-modified mannoprotein is covalently attached via its lipidless GPI glycan remnant to the 1,6-beta-glucan of the outer cell wall layer.

It localises to the secreted. Its subcellular location is the cell wall. The protein resides in the cell membrane. GPI-anchored cell wall protein involved in stabilizing the cell wall. Not implicated in virulence, heme uptake and biofilm formation. This chain is GPI-anchored hemophore cfmB, found in Aspergillus fumigatus (strain ATCC MYA-4609 / CBS 101355 / FGSC A1100 / Af293) (Neosartorya fumigata).